A 331-amino-acid polypeptide reads, in one-letter code: uncharacterized protein (331 aa).

4 WD repeats span residues 53-92, 97-139, 144-184, and 300-331; these read KAHTNITGIISCDQLNGVITCGSEGEIHLWDIRSQAKSAV, QQST…KLIR, AHND…DSTD, and ASEEICRAISFDVKNDVYYSGGEDGLLQAFRV.

The protein localises to the cytoplasm. The protein resides in the nucleus. This is an uncharacterized protein from Schizosaccharomyces pombe (strain 972 / ATCC 24843) (Fission yeast).